Reading from the N-terminus, the 333-residue chain is Fructose-1,6-bisphosphatase class 1 (333 aa).

4 residues coordinate Mg(2+): Glu-92, Asp-113, Leu-115, and Asp-116. Substrate is bound by residues 116-119, Asn-209, Tyr-242, and Lys-272; that span reads DGSS. Mg(2+) is bound at residue Glu-278.

This sequence belongs to the FBPase class 1 family. Homotetramer. Mg(2+) serves as cofactor.

The protein resides in the cytoplasm. The enzyme catalyses beta-D-fructose 1,6-bisphosphate + H2O = beta-D-fructose 6-phosphate + phosphate. It functions in the pathway carbohydrate biosynthesis; Calvin cycle. This chain is Fructose-1,6-bisphosphatase class 1, found in Chlorobaculum tepidum (strain ATCC 49652 / DSM 12025 / NBRC 103806 / TLS) (Chlorobium tepidum).